The sequence spans 71 residues: Small ribosomal subunit protein bS21 (71 aa).

The disordered stretch occupies residues 39 to 71 (EKPTQERKRKAAAAVKRQMRRTSRDVTKRKRLY). Over residues 45–71 (RKRKAAAAVKRQMRRTSRDVTKRKRLY) the composition is skewed to basic residues.

It belongs to the bacterial ribosomal protein bS21 family.

The chain is Small ribosomal subunit protein bS21 from Xylella fastidiosa (strain M12).